The sequence spans 376 residues: Fibromodulin (376 aa).

Residues 1–18 form the signal peptide; it reads MQWASILLLAGLCSLSWA. Gln-19 is subject to Pyrrolidone carboxylic acid. Sulfotyrosine is present on residues Tyr-20, Tyr-38, Tyr-45, Tyr-47, Tyr-50, Tyr-53, Tyr-55, Tyr-63, and Tyr-65. Residues 67–105 enclose the LRRNT domain; the sequence is SPPQPEPRDCPQECDCPPNFPTAMYCDNRNLKYLPFVPS. LRR repeat units lie at residues 106 to 127, 130 to 151, 156 to 176, 177 to 198, 201 to 222, 224 to 245, 246 to 266, and 269 to 289; these read RMKYVYFQNNQISSIQEGVFDN, GLLWIALHGNQITSDKVGKKVF, HLERLYLDHNNLTRIPSPLPR, SLRELHLDHNQISRVPNNALEG, NLTALYLHHNEIQEVGSSMKGL, SLILLDLSYNHLRKVPDGLPSA, LEQLYLEHNNVFSVPDSYFRG, and KLLYVRLSHNSLTNNGLASNT. N-linked (GlcNAc...) (keratan sulfate) asparagine glycosylation is present at Asn-127. A glycan (N-linked (GlcNAc...) (keratan sulfate) asparagine) is linked at Asn-166. The N-linked (GlcNAc...) (keratan sulfate) asparagine glycan is linked to Asn-201. N-linked (GlcNAc...) (keratan sulfate) asparagine glycosylation is present at Asn-291. LRR repeat units follow at residues 294 to 315 and 316 to 335; these read SLLELDLSYNQLQKIPPVSTNL and ENLYLQGNRINEFSISSFCT. Cysteines 334 and 367 form a disulfide. N-linked (GlcNAc...) asparagine glycosylation is present at Asn-341. The LRR 11 repeat unit spans residues 344–365; it reads KLQVLRLDGNEIKRSAMPADAP.

Belongs to the small leucine-rich proteoglycan (SLRP) family. SLRP class II subfamily. Binds to type I and type II collagen. In terms of processing, binds keratan sulfate chains.

It is found in the secreted. It localises to the extracellular space. Its subcellular location is the extracellular matrix. Its function is as follows. Affects the rate of fibrils formation. May have a primary role in collagen fibrillogenesis. This is Fibromodulin (FMOD) from Bos taurus (Bovine).